The sequence spans 622 residues: MQTSKSSLAALTLGAIGVVYGDIGTSVLYAVKEVFGSGHVPFTHANVYGVLSVLFWTLTVIVSLKYVVLVLRADNHGEGGLIAMLALASQAVKDRPRLRGWLLGLGIFGTSLFYGDGVITPAISVLSAIEGLEVVSPHFGKAVIPLTLVVLFGLFAVQKRGTAGVGRYFGPVTLVWFFTIAALGVPHIVGHPEILGALSPHHALGFILGNPGISFIILGAVVLCVTGAEALYADLGHFGKRPIRLAWFSVAMPALTINYFGQGALLLAEPSAVKNPFYMMAPDWALVPLVVLATMATVIASQALITGAFSVTKQVIQLGYLPRLNIQHTSVRETGQIYLPFVNWSLFVAIVLAVVMFRNSSNLAAAYGIAVTLDMLITTVLTFFVIRYGWGYPLALCVATTGFFFVVDLAFFSSNLLKLLQGGWFPLMIGGLVFTLMMTWKRGRELLNDKLREDSIGLQDFLASVQANPPMRVDGTAVFLSAEAGVVPNALLHNLKHNKVLHRQNLFVTVRYHETPWIGLDQRLQVAPLGGDCWQVTVNYGFKNELDLPSALRLMHGRGCELETMSTSYFLSRDVVVPTIGSGMAPWREKLFAQMHHNASGVAAFLHLPSNAVVELGSKVEI.

12 consecutive transmembrane segments (helical) span residues 8–28 (LAAL…TSVL), 50–70 (VLSV…VVLV), 100–120 (GWLL…GVIT), 137–157 (PHFG…LFAV), 169–189 (FGPV…PHIV), 203–223 (ALGF…AVVL), 247–267 (WFSV…ALLL), 285–305 (ALVP…QALI), 337–357 (IYLP…VVMF), 366–386 (AYGI…FFVI), 392–412 (YPLA…LAFF), and 419–439 (LLQG…LMMT).

It belongs to the HAK/KUP transporter (TC 2.A.72) family.

The protein localises to the cell inner membrane. It carries out the reaction K(+)(in) + H(+)(in) = K(+)(out) + H(+)(out). Transport of potassium into the cell. Likely operates as a K(+):H(+) symporter. This Acidovorax ebreus (strain TPSY) (Diaphorobacter sp. (strain TPSY)) protein is Probable potassium transport system protein Kup.